We begin with the raw amino-acid sequence, 516 residues long: MLIKIVIACVITAIIVALIAWKSAISYYKKVVEGKIGSADEKAREIIDEALKTAETKKREALLEAKEESLKTKNELERETKERRAELQRYEKRVLTKEETLDRKTEALEKKEAKLVAKEQELDRLRVEVEESHQKQVAELEKISGLTSEQAKEYLIKTVEDEVKHETAVLIKELESRAKEEAEKKAKDYVVTAIQKCAADHVAETTISVVQLPNDEMKGRIIGREGRNIRTLETLTGVDLIIDDTPEAVILSGFDPIRRETARIALEKLIVDGRIHPARIEEMVEKAQKEVETMIREEGEAATLEVGVHGIHPELVRLLGKMKFRTSYGQNALKHSIEVAILSGLLAGEIGVDVRIAKRAGLLHDIGKSVDHEMEGTHVQIGVDLCRKYKESPIVINAVEAHHGDVEFQSLIACIVQAADTISAARPGARRETLETYTNRLKQLEDITNGFKGVDKSFAIQAGREVRVMVVPDQVTDDDMVLLARDLSKKIESELEYPGMIKVNVIRESRVTDYAK.

The helical transmembrane segment at 1 to 21 threads the bilayer; sequence MLIKIVIACVITAIIVALIAW. One can recognise a KH domain in the interval 206-269; it reads TISVVQLPND…ETARIALEKL (64 aa). The HD domain maps to 332-425; it reads ALKHSIEVAI…VQAADTISAA (94 aa).

It belongs to the RNase Y family.

It localises to the cell membrane. In terms of biological role, endoribonuclease that initiates mRNA decay. The sequence is that of Ribonuclease Y from Lachnoclostridium phytofermentans (strain ATCC 700394 / DSM 18823 / ISDg) (Clostridium phytofermentans).